Consider the following 511-residue polypeptide: ATP synthase subunit alpha 1 (511 aa).

Position 170-177 (170-177 (GDRQTGKT)) interacts with ATP.

This sequence belongs to the ATPase alpha/beta chains family. F-type ATPases have 2 components, CF(1) - the catalytic core - and CF(0) - the membrane proton channel. CF(1) has five subunits: alpha(3), beta(3), gamma(1), delta(1), epsilon(1). CF(0) has three main subunits: a(1), b(2) and c(9-12). The alpha and beta chains form an alternating ring which encloses part of the gamma chain. CF(1) is attached to CF(0) by a central stalk formed by the gamma and epsilon chains, while a peripheral stalk is formed by the delta and b chains.

Its subcellular location is the cell inner membrane. The catalysed reaction is ATP + H2O + 4 H(+)(in) = ADP + phosphate + 5 H(+)(out). Functionally, produces ATP from ADP in the presence of a proton gradient across the membrane. The alpha chain is a regulatory subunit. This is ATP synthase subunit alpha 1 from Gluconobacter oxydans (strain 621H) (Gluconobacter suboxydans).